The chain runs to 732 residues: E3 ubiquitin-protein ligase hel2 (732 aa).

The disordered stretch occupies residues 1–48 (MSPSGPNLNNKEHNRASEKKNSRTHNKKTNRNQSKEKPVSSRSVETPK). Residues 10–21 (NKEHNRASEKKN) show a composition bias toward basic and acidic residues. An RING-type zinc finger spans residues 81–121 (CFICAEGITYSCVLPCNHRMCHVCALRLRALYKTKECTFCK). In terms of domain architecture, LIM zinc-binding spans 245-315 (PKCEFCNTHF…RECLERKFVV (71 aa)). 3 disordered regions span residues 345–380 (IIPQFSYDPPGASGRNRRERTSSTPSEQSTSVNETA), 411–501 (DFGF…QHQQ), and 623–732 (HDGP…FHIG). Polar residues-rich tracts occupy residues 366–380 (SSTPSEQSTSVNETA) and 415–433 (TLSNPAPTSARPATSTRTI). Positions 457–468 (SSSAPSVPVSAP) are enriched in low complexity. Serine 482 is subject to Phosphoserine. Composition is skewed to polar residues over residues 490-501 (PMASSEQAQHQQ) and 629-654 (SAPSSSINLANITSRPTNSSAANTPS). Positions 701–713 (STPNTSSNRNSNT) are enriched in low complexity.

Belongs to the ZNF598/HEL2 family.

The protein resides in the cytoplasm. It catalyses the reaction S-ubiquitinyl-[E2 ubiquitin-conjugating enzyme]-L-cysteine + [acceptor protein]-L-lysine = [E2 ubiquitin-conjugating enzyme]-L-cysteine + N(6)-ubiquitinyl-[acceptor protein]-L-lysine.. The protein operates within protein modification; protein ubiquitination. In terms of biological role, E3 ubiquitin-protein ligase that plays a key role in the ribosome quality control (RQC), a pathway that takes place when a ribosome has stalled during translation, leading to degradation of nascent peptide chains. Activated when ribosomes are stalled within an mRNA following translation of prematurely polyadenylated mRNAs. Acts as a ribosome collision sensor: specifically recognizes and binds collided ribosome and ubiquitinates the 40S ribosomal proteins rps20/uS10 and rps3/uS3. Catalyzes 'Lys-63'-linked polyubiquitination of rps20/uS10, promoting recruitment of the RQT (ribosome quality control trigger) complex, which drives the disassembly of stalled ribosomes, followed by degradation of nascent peptides. The chain is E3 ubiquitin-protein ligase hel2 from Schizosaccharomyces pombe (strain 972 / ATCC 24843) (Fission yeast).